The sequence spans 252 residues: Imidazole glycerol phosphate synthase subunit HisF (252 aa).

Catalysis depends on residues Asp11 and Asp130.

Belongs to the HisA/HisF family. In terms of assembly, heterodimer of HisH and HisF.

The protein resides in the cytoplasm. It catalyses the reaction 5-[(5-phospho-1-deoxy-D-ribulos-1-ylimino)methylamino]-1-(5-phospho-beta-D-ribosyl)imidazole-4-carboxamide + L-glutamine = D-erythro-1-(imidazol-4-yl)glycerol 3-phosphate + 5-amino-1-(5-phospho-beta-D-ribosyl)imidazole-4-carboxamide + L-glutamate + H(+). The protein operates within amino-acid biosynthesis; L-histidine biosynthesis; L-histidine from 5-phospho-alpha-D-ribose 1-diphosphate: step 5/9. Functionally, IGPS catalyzes the conversion of PRFAR and glutamine to IGP, AICAR and glutamate. The HisF subunit catalyzes the cyclization activity that produces IGP and AICAR from PRFAR using the ammonia provided by the HisH subunit. The chain is Imidazole glycerol phosphate synthase subunit HisF from Alkaliphilus metalliredigens (strain QYMF).